A 169-amino-acid polypeptide reads, in one-letter code: Styrene-oxide isomerase (169 aa).

4 helical membrane passes run 13-33, 61-81, 85-105, and 129-149; these read GILM…HLVG, PALN…LGFA, PHLL…FYFF, and FLAL…LAVI.

The protein localises to the membrane. The enzyme catalyses styrene oxide = 2-phenylacetaldehyde. It participates in aromatic compound metabolism. Epoxystyrene isomerase that catalyzes the second step in the aerobic styrene degradation pathway by converting epoxystyrene to phenylacetaldehyde. The chain is Styrene-oxide isomerase (styC) from Pseudomonas fluorescens.